The following is a 196-amino-acid chain: Probable thymidylate kinase (196 aa).

9 to 16 (GIDGSGKT) is an ATP binding site.

This sequence belongs to the thymidylate kinase family.

The enzyme catalyses dTMP + ATP = dTDP + ADP. This Methanococcus aeolicus (strain ATCC BAA-1280 / DSM 17508 / OCM 812 / Nankai-3) protein is Probable thymidylate kinase.